The chain runs to 167 residues: MRCAILYSYAKERAGPLKPGVNTVEDAVKTVVAPVYDRFHLVPVELLKYADRKVGELDRHVPSNVKKVSSQARSVVSEVRRDGVSTFAKTVYSKYEPTAEQCAVSAWRKLNQLPLFPQVANAVLPKAAYCTEKYNEVIVSSAEKGYRVSAYLPLVPTEKIAKVFSGN.

This sequence belongs to the REF/SRPP family.

Its function is as follows. Plays a role in plant defense. The sequence is that of Stress-related protein (SRP) from Phaseolus vulgaris (Kidney bean).